The following is a 209-amino-acid chain: Ribosome maturation factor RimM (209 aa).

A disordered region spans residues 1-28; it reads MARRPQRPAPSGRAGAGRGAAGAAPPGP. The 75-residue stretch at 123–197 folds into the PRC barrel domain; it reads EDEFFTADLV…RVTIAPPEDL (75 aa).

This sequence belongs to the RimM family. Binds ribosomal protein uS19.

It localises to the cytoplasm. Its function is as follows. An accessory protein needed during the final step in the assembly of 30S ribosomal subunit, possibly for assembly of the head region. Essential for efficient processing of 16S rRNA. May be needed both before and after RbfA during the maturation of 16S rRNA. It has affinity for free ribosomal 30S subunits but not for 70S ribosomes. In Methylobacterium sp. (strain 4-46), this protein is Ribosome maturation factor RimM.